Reading from the N-terminus, the 141-residue chain is Large ribosomal subunit protein uL11 (141 aa).

The protein belongs to the universal ribosomal protein uL11 family. In terms of assembly, part of the ribosomal stalk of the 50S ribosomal subunit. Interacts with L10 and the large rRNA to form the base of the stalk. L10 forms an elongated spine to which L12 dimers bind in a sequential fashion forming a multimeric L10(L12)X complex. Post-translationally, one or more lysine residues are methylated.

Functionally, forms part of the ribosomal stalk which helps the ribosome interact with GTP-bound translation factors. The chain is Large ribosomal subunit protein uL11 from Thermomicrobium roseum (strain ATCC 27502 / DSM 5159 / P-2).